Here is a 315-residue protein sequence, read N- to C-terminus: ATP synthase gamma chain (315 aa).

It belongs to the ATPase gamma chain family. As to quaternary structure, F-type ATPases have 2 components, CF(1) - the catalytic core - and CF(0) - the membrane proton channel. CF(1) has five subunits: alpha(3), beta(3), gamma(1), delta(1), epsilon(1). CF(0) has three main subunits: a, b and c.

The protein resides in the cellular thylakoid membrane. Its function is as follows. Produces ATP from ADP in the presence of a proton gradient across the membrane. The gamma chain is believed to be important in regulating ATPase activity and the flow of protons through the CF(0) complex. The protein is ATP synthase gamma chain of Synechococcus sp. (strain PCC 6716).